The sequence spans 126 residues: Large ribosomal subunit protein bL12 (126 aa).

This sequence belongs to the bacterial ribosomal protein bL12 family. In terms of assembly, homodimer. Part of the ribosomal stalk of the 50S ribosomal subunit. Forms a multimeric L10(L12)X complex, where L10 forms an elongated spine to which 2 to 4 L12 dimers bind in a sequential fashion. Binds GTP-bound translation factors.

In terms of biological role, forms part of the ribosomal stalk which helps the ribosome interact with GTP-bound translation factors. Is thus essential for accurate translation. This is Large ribosomal subunit protein bL12 from Prosthecochloris aestuarii (strain DSM 271 / SK 413).